The chain runs to 321 residues: L-carnitine dehydrogenase (321 aa).

Residue 14–19 participates in NAD(+) binding; it reads GAGVIG.

It belongs to the 3-hydroxyacyl-CoA dehydrogenase family. L-carnitine dehydrogenase subfamily. Homodimer.

The protein localises to the cytoplasm. The enzyme catalyses carnitine + NAD(+) = 3-dehydrocarnitine + NADH + H(+). Its pathway is amine and polyamine metabolism; carnitine metabolism. Its function is as follows. Catalyzes the NAD(+)-dependent oxidation of L-carnitine to 3-dehydrocarnitine. This Burkholderia mallei (strain ATCC 23344) protein is L-carnitine dehydrogenase.